The primary structure comprises 345 residues: Phosphoribosylformylglycinamidine cyclo-ligase (345 aa).

It belongs to the AIR synthase family.

It localises to the cytoplasm. It carries out the reaction 2-formamido-N(1)-(5-O-phospho-beta-D-ribosyl)acetamidine + ATP = 5-amino-1-(5-phospho-beta-D-ribosyl)imidazole + ADP + phosphate + H(+). It participates in purine metabolism; IMP biosynthesis via de novo pathway; 5-amino-1-(5-phospho-D-ribosyl)imidazole from N(2)-formyl-N(1)-(5-phospho-D-ribosyl)glycinamide: step 2/2. This Histophilus somni (strain 2336) (Haemophilus somnus) protein is Phosphoribosylformylglycinamidine cyclo-ligase.